Here is a 485-residue protein sequence, read N- to C-terminus: NADH-quinone oxidoreductase subunit N (485 aa).

The next 14 helical transmembrane spans lie at 8-28 (LIALLPLLIVGLTVVVVMLSI), 35-55 (FLNATLSVIGLNAALVSLWFV), 71-91 (GFAMLYTGLVLLASLATCTFA), 105-125 (FYLLVLIAALGGILLANANHL), 127-147 (SLFLGIELISLPLFGLVGYAF), 159-179 (YTILSAAASSFLLFGMALVYA), 203-223 (LLAGFGLMIVGLGFKLSLVPF), 235-255 (PAPVSTFLATASKIAIFGVVM), 271-291 (VVLAIIAFASIIFGNLMALSQ), 297-317 (LLGYSSISHLGYLLVALIALQ), 326-346 (VGVYLAGYLFSSLGAFGVVSL), 373-393 (AAVMTVMMLSLAGIPMTLGFI), 408-430 (WWLVGAVVVGSAIGLYYYLRVAV), and 455-475 (IVVLISALLVLVLGVWPQPLI).

This sequence belongs to the complex I subunit 2 family. In terms of assembly, NDH-1 is composed of 13 different subunits. Subunits NuoA, H, J, K, L, M, N constitute the membrane sector of the complex.

It is found in the cell inner membrane. The catalysed reaction is a quinone + NADH + 5 H(+)(in) = a quinol + NAD(+) + 4 H(+)(out). In terms of biological role, NDH-1 shuttles electrons from NADH, via FMN and iron-sulfur (Fe-S) centers, to quinones in the respiratory chain. The immediate electron acceptor for the enzyme in this species is believed to be ubiquinone. Couples the redox reaction to proton translocation (for every two electrons transferred, four hydrogen ions are translocated across the cytoplasmic membrane), and thus conserves the redox energy in a proton gradient. In Escherichia coli O139:H28 (strain E24377A / ETEC), this protein is NADH-quinone oxidoreductase subunit N.